We begin with the raw amino-acid sequence, 498 residues long: ATP synthase subunit beta, chloroplastic (498 aa).

172–179 lines the ATP pocket; it reads GGAGVGKT.

This sequence belongs to the ATPase alpha/beta chains family. In terms of assembly, F-type ATPases have 2 components, CF(1) - the catalytic core - and CF(0) - the membrane proton channel. CF(1) has five subunits: alpha(3), beta(3), gamma(1), delta(1), epsilon(1). CF(0) has four main subunits: a(1), b(1), b'(1) and c(9-12).

It is found in the plastid. The protein localises to the chloroplast thylakoid membrane. It catalyses the reaction ATP + H2O + 4 H(+)(in) = ADP + phosphate + 5 H(+)(out). Functionally, produces ATP from ADP in the presence of a proton gradient across the membrane. The catalytic sites are hosted primarily by the beta subunits. This chain is ATP synthase subunit beta, chloroplastic, found in Hyophorbe lagenicaulis (Bottle palm).